Reading from the N-terminus, the 268-residue chain is Protein limb expression 1 homolog (268 aa).

This sequence belongs to the LIX1 family. In terms of assembly, interacts with ft (via intracellular domain) and ds (via intracellular domain).

Its subcellular location is the apical cell membrane. The protein resides in the cytoplasm. In terms of biological role, component of the Fat (ft) signaling pathway that functions in normal development of various organs such as the wing and leg. In developing imaginal disks, involved in regulating both the protein levels and apical localization of ft and ds. Involved in establishing planar cell polarity (PCP) along the anterior-posterior axis of the wing (the early Fz signaling event), probably by acting upstream of ds and ft to regulate Fz activity. This Drosophila melanogaster (Fruit fly) protein is Protein limb expression 1 homolog.